A 1225-amino-acid chain; its full sequence is Catenin delta-2 (1225 aa).

Disordered regions lie at residues 1 to 51 (MFAR…TSAI), 87 to 117 (SETGSMSSMSSAEEQFQWQSQDGQKDIEDEL), 134 to 242 (SGIL…HLPD), and 256 to 312 (SSTL…KSYS). 2 stretches are compositionally biased toward polar residues: residues 20-51 (QPSSASEKTSSLSPGLNTSNGDGSETETTSAI) and 98-108 (AEEQFQWQSQD). The stretch at 49–84 (SAILASVKEQELQFERLTRELEAERQIVASQLERCK) forms a coiled coil. Low complexity predominate over residues 149 to 160 (SLLSQSALQLNS). Polar residues-rich tracts occupy residues 172–187 (YHSNQTLALGETTPSQ) and 195–209 (ARATGQSFSQGTTSR). At Arg-209 the chain carries Omega-N-methylarginine. Residues 217-229 (EPAPPPPPPPREP) show a composition bias toward pro residues. Arg-264 carries the omega-N-methylarginine modification. 2 positions are modified to phosphoserine: Ser-267 and Ser-276. Omega-N-methylarginine occurs at positions 282 and 296. Residues 299–312 (SPKQSPSRLAKSYS) are compositionally biased toward polar residues. 4 positions are modified to phosphoserine: Ser-327, Ser-360, Ser-415, and Ser-461. The ARM 1 repeat unit spans residues 394–438 (GSRASYSSQHGHLGPELRALQSPEHHIDPIYEDRVYQKPPMRSLS). Disordered stretches follow at residues 432 to 483 (PPMR…NAAA) and 514 to 542 (SPYSKSGPALPPEGTLARSPSIDSIQKDP). Positions 469 to 478 (LQRTGSQHGP) are enriched in polar residues. At Ser-514 the chain carries Phosphoserine. Tyr-516 is modified (phosphotyrosine). ARM repeat units lie at residues 540-579 (KDPREFGWRDPELPEVIQMLQHQFPSVQSNAAAYLQHLCF), 582-621 (NKIKAEIRRQGGIQLLVDLLDHRMTEVHRSACGALRNLVY), 626-666 (DDNK…NLSS), 682-724 (LTNA…NVSS), 728-773 (EARR…NLSY), 835-875 (PKGI…NLAA), 882-921 (VYIRAAVRKEKGLPILVELLRIDNDRVVCAVATALRNMAL), and 975-1018 (MENA…SMWQ). The interval 1042–1077 (TIERDRQRPYSSSRTPSISPVRVSPNNRSASAPASP) is disordered. Polar residues predominate over residues 1050-1059 (PYSSSRTPSI). A phosphoserine mark is found at Ser-1065 and Ser-1076. A compositionally biased stretch (low complexity) spans 1065–1077 (SPNNRSASAPASP).

Belongs to the beta-catenin family. In terms of assembly, binds to E-cadherin at a juxtamembrane site within the cytoplasmic domain. Interacts with PDZD2. Interacts with ZBTB33. Binds to PSEN1. Interacts with ARHGEF28. Interacts (via the extreme C-terminus) with FRMPD2 (via the PDZ 2 domain). Interacts with CDK5. Interacts with CTNNB1. Interacts with GSK3A and GSK3B. Interacts with DNM2. Interacts with CCDC85B. Post-translationally, O-glycosylated. Phosphorylated by CDK5. Phosphorylated by GSK3B. Expressed in brain; highest expression is observed in fetal brain.

It is found in the nucleus. It localises to the cell junction. The protein resides in the adherens junction. Its subcellular location is the cell projection. The protein localises to the dendrite. It is found in the perikaryon. In terms of biological role, has a critical role in neuronal development, particularly in the formation and/or maintenance of dendritic spines and synapses. Involved in the regulation of Wnt signaling. It probably acts on beta-catenin turnover, facilitating beta-catenin interaction with GSK3B, phosphorylation, ubiquitination and degradation. Functions as a transcriptional activator when bound to ZBTB33. May be involved in neuronal cell adhesion and tissue morphogenesis and integrity by regulating adhesion molecules. This Homo sapiens (Human) protein is Catenin delta-2 (CTNND2).